Consider the following 160-residue polypeptide: Type IV major fimbrial protein FimA (160 aa).

Positions 1–7 (MKSLQKG) are cleaved as a propeptide — leader sequence. Position 8 is an N-methylphenylalanine (Phe-8). The helical transmembrane segment at 8 to 28 (FTLIELMIVVAIIGILAAFAI) threads the bilayer. Residues Cys-63 and Cys-106 are joined by a disulfide bond.

Belongs to the N-Me-Phe pilin family. The pili are polar flexible filaments of about 5.4 nanometers diameter and 2.5 micrometers average length; they consist of only a single polypeptide chain arranged in a helical configuration of five subunits per turn in the assembled pilus.

The protein resides in the fimbrium. Its subcellular location is the membrane. Its function is as follows. Major component of the type IV fimbriae that plays an essential role in twitching motility, natural transformation, and protease secretion. This is Type IV major fimbrial protein FimA (fimA) from Dichelobacter nodosus (Bacteroides nodosus).